We begin with the raw amino-acid sequence, 385 residues long: Galactokinase (385 aa).

Position 34–37 (34–37 (EHTD)) interacts with substrate. An ATP-binding site is contributed by 124-130 (SSGLSSS). Ser-130 and Glu-162 together coordinate Mg(2+). The active-site Proton acceptor is the Asp-174. A substrate-binding site is contributed by Tyr-223.

The protein belongs to the GHMP kinase family. GalK subfamily.

Its subcellular location is the cytoplasm. It catalyses the reaction alpha-D-galactose + ATP = alpha-D-galactose 1-phosphate + ADP + H(+). Its pathway is carbohydrate metabolism; galactose metabolism. In terms of biological role, catalyzes the transfer of the gamma-phosphate of ATP to D-galactose to form alpha-D-galactose-1-phosphate (Gal-1-P). This is Galactokinase from Mannheimia succiniciproducens (strain KCTC 0769BP / MBEL55E).